A 351-amino-acid polypeptide reads, in one-letter code: Transcription factor Atoh1 (351 aa).

2 disordered regions span residues 16–39 and 89–116; these read LGDH…PATL and EAAA…SKSP. Residues 26–36 show a composition bias toward pro residues; sequence HHVPPLTPQPP. In terms of domain architecture, bHLH spans 156-208; the sequence is QRRLAANARERRRMHGLNHAFDQLRNVIPSFNNDKKLSKYETLQMAQIYINAL. Disordered regions lie at residues 244 to 278 and 308 to 351; these read GAGA…GPAS and LSPS…DEAS. Over residues 247-256 the composition is skewed to low complexity; it reads ASAVAGAQPA. Residues 258–268 show a composition bias toward pro residues; the sequence is GGGPRPTPPGP. A compositionally biased stretch (basic and acidic residues) spans 332–351; sequence HRSDGEFSPHSHYSDSDEAS.

In terms of assembly, efficient DNA binding requires dimerization with another bHLH protein. As to expression, developing nervous system, and in adult epithelial cells of the gastrointestinal tract.

It localises to the nucleus. Its function is as follows. Transcriptional regulator. Activates E box-dependent transcription in collaboration with TCF3/E47, but the activity is completely antagonized by the negative regulator of neurogenesis HES1. Plays a role in the differentiation of subsets of neural cells by activating E box-dependent transcription. This Mus musculus (Mouse) protein is Transcription factor Atoh1.